A 187-amino-acid polypeptide reads, in one-letter code: Calcium and integrin-binding family member 2 (187 aa).

EF-hand domains are found at residues 66–101 (RENPFKERIVEAFSEDGEGNLTFNDFVDMFSVLCES), 103–138 (PRELKANYAFKIYDFNTDNFICKEDLELTLARLTKS), and 144–179 (EVVLVCDKVIEEADLDGDGKLGFADFEDMIAKAPDF). 9 residues coordinate Ca(2+): D116, N118, D120, D127, D157, D159, D161, K163, and D168.

In terms of assembly, monomer. Homodimer. Interacts with WHRN and MYO7A. Interacts with ITGA2B (via C-terminus cytoplasmic tail region); the interactions are stabilized/increased in a calcium and magnesium-dependent manner. Interacts with ITGA7 (via C-terminus cytoplasmic tail region); the interactions are stabilized/increased in a calcium and magnesium-dependent manner. Interacts with TMC1. Interacts with TMC2.

It localises to the cytoplasm. The protein resides in the cell projection. Its subcellular location is the stereocilium. It is found in the photoreceptor inner segment. The protein localises to the cilium. It localises to the photoreceptor outer segment. The protein resides in the cell membrane. Its subcellular location is the sarcolemma. Calcium- and integrin-binding protein that plays a role in intracellular calcium homeostasis. Acts as an auxiliary subunit of the sensory mechanoelectrical transduction (MET) channel in hair cells. Essential for mechanoelectrical transduction (MET) currents in auditory hair cells and thereby required for hearing. Regulates the function of hair cell mechanotransduction by controlling the distribution of transmembrane channel-like proteins TMC1 and TMC2, and by regulating the function of the MET channels in hair cells. Required for the maintenance of auditory hair cell stereocilia bundle morphology and function and for hair-cell survival in the cochlea. Critical for proper photoreceptor cell maintenance and function. Plays a role in intracellular calcium homeostasis by decreasing ATP-induced calcium release. The polypeptide is Calcium and integrin-binding family member 2 (Cib2) (Rattus norvegicus (Rat)).